The primary structure comprises 113 residues: Pancreatic progenitor cell differentiation and proliferation factor B (113 aa).

Belongs to the PPDPF family.

Probable regulator of exocrine pancreas development. This chain is Pancreatic progenitor cell differentiation and proliferation factor B (ppdpf-b), found in Xenopus laevis (African clawed frog).